Reading from the N-terminus, the 241-residue chain is Probable 2-phosphosulfolactate phosphatase (241 aa).

Belongs to the ComB family. Mg(2+) is required as a cofactor.

The catalysed reaction is (2R)-O-phospho-3-sulfolactate + H2O = (2R)-3-sulfolactate + phosphate. This Caldanaerobacter subterraneus subsp. tengcongensis (strain DSM 15242 / JCM 11007 / NBRC 100824 / MB4) (Thermoanaerobacter tengcongensis) protein is Probable 2-phosphosulfolactate phosphatase.